The following is a 170-amino-acid chain: 2-oxo-4-hydroxy-4-carboxy-5-ureidoimidazoline decarboxylase (170 aa).

His67 serves as the catalytic Proton donor. Substrate-binding positions include Pro68, 84-88 (SQREQ), and 119-123 (FVLAL).

The protein belongs to the OHCU decarboxylase family.

The protein localises to the peroxisome. The catalysed reaction is 5-hydroxy-2-oxo-4-ureido-2,5-dihydro-1H-imidazole-5-carboxylate + H(+) = (S)-allantoin + CO2. It functions in the pathway purine metabolism; urate degradation; (S)-allantoin from urate: step 3/3. Catalyzes the stereoselective decarboxylation of 2-oxo-4-hydroxy-4-carboxy-5-ureidoimidazoline (OHCU) to (S)-allantoin. This chain is 2-oxo-4-hydroxy-4-carboxy-5-ureidoimidazoline decarboxylase (URAD), found in Bos taurus (Bovine).